Here is a 137-residue protein sequence, read N- to C-terminus: MPTINQLVRKPRKSKIEKSDSPALNIGYNSHKKVHTKIAAPQKRGVATRVGTMTPKKPNSALRKFARVRLSNLIEVTAYIPGIGHNLQEHSVVLIRGGRVKDLPGVRYHIVRGALDTAGVADRKQGRSKYGAKRPKG.

Disordered stretches follow at residues methionine 1–serine 21 and valine 34–lysine 57. Aspartate 102 carries the 3-methylthioaspartic acid modification.

This sequence belongs to the universal ribosomal protein uS12 family. As to quaternary structure, part of the 30S ribosomal subunit. Contacts proteins S8 and S17. May interact with IF1 in the 30S initiation complex.

In terms of biological role, with S4 and S5 plays an important role in translational accuracy. Its function is as follows. Interacts with and stabilizes bases of the 16S rRNA that are involved in tRNA selection in the A site and with the mRNA backbone. Located at the interface of the 30S and 50S subunits, it traverses the body of the 30S subunit contacting proteins on the other side and probably holding the rRNA structure together. The combined cluster of proteins S8, S12 and S17 appears to hold together the shoulder and platform of the 30S subunit. This Streptococcus uberis (strain ATCC BAA-854 / 0140J) protein is Small ribosomal subunit protein uS12.